Here is a 438-residue protein sequence, read N- to C-terminus: ATP-dependent protease ATPase subunit HslU (438 aa).

Residues V18, 60–65 (GVGKTE), D252, E317, and R389 contribute to the ATP site.

This sequence belongs to the ClpX chaperone family. HslU subfamily. In terms of assembly, a double ring-shaped homohexamer of HslV is capped on each side by a ring-shaped HslU homohexamer. The assembly of the HslU/HslV complex is dependent on binding of ATP.

It is found in the cytoplasm. In terms of biological role, ATPase subunit of a proteasome-like degradation complex; this subunit has chaperone activity. The binding of ATP and its subsequent hydrolysis by HslU are essential for unfolding of protein substrates subsequently hydrolyzed by HslV. HslU recognizes the N-terminal part of its protein substrates and unfolds these before they are guided to HslV for hydrolysis. This Saccharophagus degradans (strain 2-40 / ATCC 43961 / DSM 17024) protein is ATP-dependent protease ATPase subunit HslU.